Reading from the N-terminus, the 432-residue chain is Adenylosuccinate synthetase 2 (432 aa).

Residues 12 to 18 (GDEGKGR) and 40 to 42 (GHT) each bind GTP. Catalysis depends on D13, which acts as the Proton acceptor. Residues D13 and G40 each contribute to the Mg(2+) site. Residues 13–16 (DEGK), 38–41 (NAGH), T128, R142, Q222, T237, and R301 contribute to the IMP site. The active-site Proton donor is the H41. 297-303 (VNTGRPR) is a substrate binding site. Residues R303, 329 to 331 (KLD), and 411 to 413 (TTG) each bind GTP.

The protein belongs to the adenylosuccinate synthetase family. As to quaternary structure, homodimer. The cofactor is Mg(2+).

Its subcellular location is the cytoplasm. It carries out the reaction IMP + L-aspartate + GTP = N(6)-(1,2-dicarboxyethyl)-AMP + GDP + phosphate + 2 H(+). It participates in purine metabolism; AMP biosynthesis via de novo pathway; AMP from IMP: step 1/2. Its function is as follows. Plays an important role in the de novo pathway of purine nucleotide biosynthesis. Catalyzes the first committed step in the biosynthesis of AMP from IMP. This is Adenylosuccinate synthetase 2 from Burkholderia lata (strain ATCC 17760 / DSM 23089 / LMG 22485 / NCIMB 9086 / R18194 / 383).